Here is a 335-residue protein sequence, read N- to C-terminus: Phosphatidylglycerol--prolipoprotein diacylglyceryl transferase (335 aa).

Transmembrane regions (helical) follow at residues 31-51, 67-87, and 100-120; these read IYWY…TYSL, YIFL…LAIG, and LAIQ…FPLI. Arg163 contributes to the a 1,2-diacyl-sn-glycero-3-phospho-(1'-sn-glycerol) binding site. 3 helical membrane-spanning segments follow: residues 213 to 233, 235 to 255, and 277 to 297; these read PLFL…YFGL, YIKQ…YGVT, and SLLL…APLL.

It belongs to the Lgt family.

The protein localises to the cell membrane. It carries out the reaction L-cysteinyl-[prolipoprotein] + a 1,2-diacyl-sn-glycero-3-phospho-(1'-sn-glycerol) = an S-1,2-diacyl-sn-glyceryl-L-cysteinyl-[prolipoprotein] + sn-glycerol 1-phosphate + H(+). It functions in the pathway protein modification; lipoprotein biosynthesis (diacylglyceryl transfer). Functionally, catalyzes the transfer of the diacylglyceryl group from phosphatidylglycerol to the sulfhydryl group of the N-terminal cysteine of a prolipoprotein, the first step in the formation of mature lipoproteins. The chain is Phosphatidylglycerol--prolipoprotein diacylglyceryl transferase from Ureaplasma parvum serovar 3 (strain ATCC 27815 / 27 / NCTC 11736).